Reading from the N-terminus, the 732-residue chain is Coagulation factor XIII A chain (732 aa).

The interval 1-27 is disordered; sequence MSETSRTAFGGRRAVPPNNSNAAEDDL. Ser2 bears the N-acetylserine mark. A propeptide spans 2–38 (activation peptide); that stretch reads SETSRTAFGGRRAVPPNNSNAAEDDLPTVELQGVVPR. Catalysis depends on residues Cys315, His374, and Asp397. Asn437, Asp439, Glu486, and Glu491 together coordinate Ca(2+). An N-linked (GlcNAc...) asparagine glycan is attached at Asn614.

It belongs to the transglutaminase superfamily. Transglutaminase family. In terms of assembly, tetramer of two A chains (F13A1) and two B (F13B) chains. Ca(2+) is required as a cofactor. Post-translationally, the activation peptide is released by thrombin.

It localises to the cytoplasm. The protein localises to the secreted. The catalysed reaction is L-glutaminyl-[protein] + L-lysyl-[protein] = [protein]-L-lysyl-N(6)-5-L-glutamyl-[protein] + NH4(+). Factor XIII is activated by thrombin and calcium ion to a transglutaminase that catalyzes the formation of gamma-glutamyl-epsilon-lysine cross-links between fibrin chains, thus stabilizing the fibrin clot. Also cross-link alpha-2-plasmin inhibitor, or fibronectin, to the alpha chains of fibrin. The protein is Coagulation factor XIII A chain (F13A1) of Homo sapiens (Human).